We begin with the raw amino-acid sequence, 361 residues long: Phosphoserine aminotransferase (361 aa).

Arginine 43 is a binding site for L-glutamate. Pyridoxal 5'-phosphate is bound by residues alanine 77–serine 78, tryptophan 103, threonine 153, aspartate 173, and glutamine 196. Position 197 is an N6-(pyridoxal phosphate)lysine (lysine 197). Asparagine 238–threonine 239 lines the pyridoxal 5'-phosphate pocket.

This sequence belongs to the class-V pyridoxal-phosphate-dependent aminotransferase family. SerC subfamily. In terms of assembly, homodimer. The cofactor is pyridoxal 5'-phosphate.

It localises to the cytoplasm. It carries out the reaction O-phospho-L-serine + 2-oxoglutarate = 3-phosphooxypyruvate + L-glutamate. It catalyses the reaction 4-(phosphooxy)-L-threonine + 2-oxoglutarate = (R)-3-hydroxy-2-oxo-4-phosphooxybutanoate + L-glutamate. It functions in the pathway amino-acid biosynthesis; L-serine biosynthesis; L-serine from 3-phospho-D-glycerate: step 2/3. Catalyzes the reversible conversion of 3-phosphohydroxypyruvate to phosphoserine and of 3-hydroxy-2-oxo-4-phosphonooxybutanoate to phosphohydroxythreonine. The chain is Phosphoserine aminotransferase from Bacillus anthracis (strain A0248).